The chain runs to 163 residues: Epithelial membrane protein 3 (163 aa).

A helical transmembrane segment spans residues 4-24 (LLLVVSALHILILILLFVATL). N-linked (GlcNAc...) asparagine glycosylation is found at Asn47 and Asn56. Helical transmembrane passes span 66 to 86 (VQVLMVLSLILCCLSFILFMF), 100 to 120 (TGLCQLCTSVAVFTGALIYAI), and 139 to 159 (FALAWVAFPLALVSGIIYIHL).

It belongs to the PMP-22/EMP/MP20 family.

The protein localises to the membrane. In terms of biological role, probably involved in cell proliferation and cell-cell interactions. The polypeptide is Epithelial membrane protein 3 (EMP3) (Homo sapiens (Human)).